We begin with the raw amino-acid sequence, 308 residues long: Small ribosomal subunit protein uS2 (308 aa).

Ser2 is modified (N-acetylserine). 2 laminin-binding regions span residues 161–180 (IPCN…MLAR) and 205–229 (RDPE…EFQG). 5 [DE]-W-[ST] repeats span residues 230–232 (EWT), 245–247 (DWS), 279–281 (DWS), 288–290 (DWS), and 306–308 (DWS). The segment at 242-308 (EVADWSEGVQ…DWGGATADWS (67 aa)) is laminin-binding. The interval 262 to 308 (AGIEAPGKPAPAEVYAEDWSAQPATEDWSAAPTAQAGDWGGATADWS) is disordered.

The protein belongs to the universal ribosomal protein uS2 family. In terms of assembly, monomer (37LRP) and homodimer (67LR). Component of the small ribosomal subunit. Mature ribosomes consist of a small (40S) and a large (60S) subunit. The 40S subunit contains about 33 different proteins and 1 molecule of RNA (18S). The 60S subunit contains about 49 different proteins and 3 molecules of RNA (28S, 5.8S and 5S). Interacts with rps21. Interacts with several laminins including at least lamb1. Interacts with mdk. Post-translationally, acylated. Acylation may be a prerequisite for conversion of the monomeric 37 kDa laminin receptor precursor (37LRP) to the mature dimeric 67 kDa laminin receptor (67LR), and may provide a mechanism for membrane association. In terms of processing, cleaved by stromelysin-3 (ST3) at the cell surface. Cleavage by stromelysin-3 may be a mechanism to alter cell-extracellular matrix interactions.

The protein resides in the cell membrane. It localises to the cytoplasm. The protein localises to the nucleus. Functionally, required for the assembly and/or stability of the 40S ribosomal subunit. Required for the processing of the 20S rRNA-precursor to mature 18S rRNA in a late step of the maturation of 40S ribosomal subunits. Also functions as a cell surface receptor for laminin. Plays a role in cell adhesion to the basement membrane and in the consequent activation of signaling transduction pathways. May play a role in cell fate determination and tissue morphogenesis. This Danio rerio (Zebrafish) protein is Small ribosomal subunit protein uS2 (rpsa).